The chain runs to 329 residues: Methionyl-tRNA formyltransferase (329 aa).

117-120 (SLLP) serves as a coordination point for (6S)-5,6,7,8-tetrahydrofolate.

This sequence belongs to the Fmt family.

It catalyses the reaction L-methionyl-tRNA(fMet) + (6R)-10-formyltetrahydrofolate = N-formyl-L-methionyl-tRNA(fMet) + (6S)-5,6,7,8-tetrahydrofolate + H(+). Its function is as follows. Attaches a formyl group to the free amino group of methionyl-tRNA(fMet). The formyl group appears to play a dual role in the initiator identity of N-formylmethionyl-tRNA by promoting its recognition by IF2 and preventing the misappropriation of this tRNA by the elongation apparatus. This chain is Methionyl-tRNA formyltransferase, found in Paracidovorax citrulli (strain AAC00-1) (Acidovorax citrulli).